Reading from the N-terminus, the 356-residue chain is Cytochrome c oxidase subunit 2 (356 aa).

Positions 1 to 20 are cleaved as a signal peptide; sequence MVKHWRLILLLALVPLLLSG. A lipid anchor (N-palmitoyl cysteine) is attached at C21. The S-diacylglycerol cysteine moiety is linked to residue C21. Residues 21 to 47 are Extracellular-facing; sequence CGKPFLSTLKPAGEVADKQYDLTVLST. Residues 21–257 form a cytochrome c oxidase subunit II region; that stretch reads CGKPFLSTLK…KNYKSTAESD (237 aa). The helical transmembrane segment at 48–66 threads the bilayer; it reads LIMVVVVAVVSVIFFYVIV. The Cytoplasmic segment spans residues 67-87; sequence RFRRSRVGENTIPKQVEGNKF. Residues 88-106 form a helical membrane-spanning segment; the sequence is LEITWTVIPILLLIILVIP. Residues 107-356 lie on the Extracellular side of the membrane; that stretch reads VVLYTLELAD…YLKGLKAESK (250 aa). Cu cation contacts are provided by H176, C217, C221, and H225. A Cytochrome c domain is found at 258–356; sequence LAKQGEELFK…YLKGLKAESK (99 aa). Positions 271, 274, 275, and 329 each coordinate heme c.

It belongs to the cytochrome c oxidase subunit 2 family. Requires Cu cation as cofactor. The cofactor is heme c.

The protein resides in the cell membrane. The enzyme catalyses 4 Fe(II)-[cytochrome c] + O2 + 8 H(+)(in) = 4 Fe(III)-[cytochrome c] + 2 H2O + 4 H(+)(out). Subunits I and II form the functional core of the enzyme complex. Electrons originating in cytochrome c are transferred via heme a and Cu(A) to the binuclear center formed by heme a3 and Cu(B). The sequence is that of Cytochrome c oxidase subunit 2 (ctaC) from Bacillus subtilis (strain 168).